Consider the following 408-residue polypeptide: NADH-quinone oxidoreductase subunit H (408 aa).

The next 9 membrane-spanning stretches (helical) occupy residues 18 to 38 (LAKA…AILI), 84 to 104 (PIYL…FSVI), 124 to 144 (LPVA…GIVL), 165 to 185 (VVSY…YAGT), 198 to 218 (TWFV…MVGE), 261 to 281 (SALA…FNLI), 288 to 308 (WWPL…YFWL), 321 to 341 (MALG…VVAI), and 353 to 373 (WAAW…WGLA). Residues 381–408 (VQPPPPQSTGAYPVPPLPSVGTKETADA) form a disordered region. Over residues 382–398 (QPPPPQSTGAYPVPPLP) the composition is skewed to pro residues.

The protein belongs to the complex I subunit 1 family. NDH-1 is composed of 14 different subunits. Subunits NuoA, H, J, K, L, M, N constitute the membrane sector of the complex.

The protein localises to the cell membrane. It carries out the reaction a quinone + NADH + 5 H(+)(in) = a quinol + NAD(+) + 4 H(+)(out). Its function is as follows. NDH-1 shuttles electrons from NADH, via FMN and iron-sulfur (Fe-S) centers, to quinones in the respiratory chain. The immediate electron acceptor for the enzyme in this species is believed to be menaquinone. Couples the redox reaction to proton translocation (for every two electrons transferred, four hydrogen ions are translocated across the cytoplasmic membrane), and thus conserves the redox energy in a proton gradient. This subunit may bind ubiquinone. In Mycolicibacterium smegmatis (strain ATCC 700084 / mc(2)155) (Mycobacterium smegmatis), this protein is NADH-quinone oxidoreductase subunit H.